The following is a 477-amino-acid chain: Glutamyl-tRNA(Gln) amidotransferase subunit A (477 aa).

Residues Lys-68 and Ser-143 each act as charge relay system in the active site. Ser-167 serves as the catalytic Acyl-ester intermediate.

This sequence belongs to the amidase family. GatA subfamily. In terms of assembly, heterotrimer of A, B and C subunits.

The catalysed reaction is L-glutamyl-tRNA(Gln) + L-glutamine + ATP + H2O = L-glutaminyl-tRNA(Gln) + L-glutamate + ADP + phosphate + H(+). Its function is as follows. Allows the formation of correctly charged Gln-tRNA(Gln) through the transamidation of misacylated Glu-tRNA(Gln) in organisms which lack glutaminyl-tRNA synthetase. The reaction takes place in the presence of glutamine and ATP through an activated gamma-phospho-Glu-tRNA(Gln). The chain is Glutamyl-tRNA(Gln) amidotransferase subunit A (gatA) from Mycoplasma genitalium (strain ATCC 33530 / DSM 19775 / NCTC 10195 / G37) (Mycoplasmoides genitalium).